The sequence spans 424 residues: Protein CLP1 homolog (424 aa).

ATP-binding positions include glutamate 19, lysine 60, and 122-127; that span reads DVGKST.

The protein belongs to the Clp1 family. Clp1 subfamily.

The protein localises to the nucleus. Required for endonucleolytic cleavage during polyadenylation-dependent pre-mRNA 3'-end formation. The chain is Protein CLP1 homolog (cbc) from Aedes aegypti (Yellowfever mosquito).